The following is a 323-amino-acid chain: Pyruvate dehydrogenase E1 component subunit beta (323 aa).

Position 60 (Glu60) interacts with thiamine diphosphate. K(+) contacts are provided by Ile113, Ala161, Ile162, Asp164, and Asn166.

As to quaternary structure, heterodimer of an alpha and a beta chain. Requires thiamine diphosphate as cofactor.

It localises to the plastid. Its subcellular location is the chloroplast. The catalysed reaction is N(6)-[(R)-lipoyl]-L-lysyl-[protein] + pyruvate + H(+) = N(6)-[(R)-S(8)-acetyldihydrolipoyl]-L-lysyl-[protein] + CO2. Functionally, the pyruvate dehydrogenase complex catalyzes the overall conversion of pyruvate to acetyl-CoA and CO(2). It contains multiple copies of three enzymatic components: pyruvate dehydrogenase (E1), dihydrolipoamide acetyltransferase (E2) and lipoamide dehydrogenase (E3). This is Pyruvate dehydrogenase E1 component subunit beta (pdhB) from Gracilaria tenuistipitata var. liui (Red alga).